Here is a 305-residue protein sequence, read N- to C-terminus: Carbamate kinase (305 aa).

Belongs to the carbamate kinase family.

It localises to the cytoplasm. It carries out the reaction hydrogencarbonate + NH4(+) + ATP = carbamoyl phosphate + ADP + H2O + H(+). It participates in metabolic intermediate metabolism; carbamoyl phosphate degradation; CO(2) and NH(3) from carbamoyl phosphate: step 1/1. The protein is Carbamate kinase (arcC) of Thermoplasma volcanium (strain ATCC 51530 / DSM 4299 / JCM 9571 / NBRC 15438 / GSS1).